The following is a 121-amino-acid chain: Large ribosomal subunit protein bL19 (121 aa).

It belongs to the bacterial ribosomal protein bL19 family.

This protein is located at the 30S-50S ribosomal subunit interface and may play a role in the structure and function of the aminoacyl-tRNA binding site. The polypeptide is Large ribosomal subunit protein bL19 (Chlorobium phaeobacteroides (strain BS1)).